Here is a 227-residue protein sequence, read N- to C-terminus: Ribosome-recycling factor, chloroplastic (227 aa).

Residues 1 to 34 (WTAAANYVKIKVGTGKFARKTVVLSQKRTGTLKC) constitute a chloroplast transit peptide. Residues 167–212 (KVALRNIRRDAIKSYDKLEKEKKLSEDNVKDLSSDLQKVIDEYIKK) adopt a coiled-coil conformation.

This sequence belongs to the RRF family.

It is found in the plastid. Its subcellular location is the chloroplast. Its function is as follows. Responsible for the release of ribosomes from messenger RNA at the termination of chloroplastic protein biosynthesis. The polypeptide is Ribosome-recycling factor, chloroplastic (RRF) (Daucus carota (Wild carrot)).